Consider the following 229-residue polypeptide: Protein GrpE (229 aa).

Disordered regions lie at residues 1-49 (MTEG…SANS) and 207-229 (DSTAKTEQGELGDNVTPHKEDGD). A compositionally biased stretch (basic and acidic residues) spans 13–24 (TDKRRIDPDTGE).

It belongs to the GrpE family. In terms of assembly, homodimer.

It is found in the cytoplasm. Functionally, participates actively in the response to hyperosmotic and heat shock by preventing the aggregation of stress-denatured proteins, in association with DnaK and GrpE. It is the nucleotide exchange factor for DnaK and may function as a thermosensor. Unfolded proteins bind initially to DnaJ; upon interaction with the DnaJ-bound protein, DnaK hydrolyzes its bound ATP, resulting in the formation of a stable complex. GrpE releases ADP from DnaK; ATP binding to DnaK triggers the release of the substrate protein, thus completing the reaction cycle. Several rounds of ATP-dependent interactions between DnaJ, DnaK and GrpE are required for fully efficient folding. The polypeptide is Protein GrpE (Mycobacterium leprae (strain TN)).